A 432-amino-acid chain; its full sequence is Glutamyl-tRNA reductase (432 aa).

Substrate contacts are provided by residues threonine 49–arginine 52, serine 101, glutamate 106–glutamine 108, and glutamine 112. The active-site Nucleophile is cysteine 50. Glycine 181 to isoleucine 186 contributes to the NADP(+) binding site. The interval proline 408–proline 432 is disordered.

This sequence belongs to the glutamyl-tRNA reductase family. As to quaternary structure, homodimer.

The enzyme catalyses (S)-4-amino-5-oxopentanoate + tRNA(Glu) + NADP(+) = L-glutamyl-tRNA(Glu) + NADPH + H(+). Its pathway is porphyrin-containing compound metabolism; protoporphyrin-IX biosynthesis; 5-aminolevulinate from L-glutamyl-tRNA(Glu): step 1/2. In terms of biological role, catalyzes the NADPH-dependent reduction of glutamyl-tRNA(Glu) to glutamate 1-semialdehyde (GSA). The protein is Glutamyl-tRNA reductase of Xanthomonas campestris pv. campestris (strain B100).